Here is a 450-residue protein sequence, read N- to C-terminus: Glucose-6-phosphate isomerase (450 aa).

Glutamate 290 acts as the Proton donor in catalysis. Residues histidine 311 and lysine 425 contribute to the active site.

It belongs to the GPI family.

It localises to the cytoplasm. It carries out the reaction alpha-D-glucose 6-phosphate = beta-D-fructose 6-phosphate. The protein operates within carbohydrate biosynthesis; gluconeogenesis. It functions in the pathway carbohydrate degradation; glycolysis; D-glyceraldehyde 3-phosphate and glycerone phosphate from D-glucose: step 2/4. Catalyzes the reversible isomerization of glucose-6-phosphate to fructose-6-phosphate. The polypeptide is Glucose-6-phosphate isomerase (Alkaliphilus metalliredigens (strain QYMF)).